The primary structure comprises 152 residues: Transcriptional regulator MraZ (152 aa).

2 consecutive SpoVT-AbrB domains span residues 5-52 (LNPI…THPQ) and 81-124 (ATEV…GKSQ).

It belongs to the MraZ family. As to quaternary structure, forms oligomers.

It localises to the cytoplasm. Its subcellular location is the nucleoid. In Coxiella burnetii (strain Dugway 5J108-111), this protein is Transcriptional regulator MraZ.